A 233-amino-acid polypeptide reads, in one-letter code: 6-carboxyhexanoate--CoA ligase (233 aa).

It belongs to the BioW family. As to quaternary structure, homodimer. Mg(2+) serves as cofactor.

The enzyme catalyses heptanedioate + ATP + CoA = 6-carboxyhexanoyl-CoA + AMP + diphosphate. It participates in metabolic intermediate metabolism; pimeloyl-CoA biosynthesis; pimeloyl-CoA from pimelate: step 1/1. Catalyzes the transformation of pimelate into pimeloyl-CoA with concomitant hydrolysis of ATP to AMP. In Methanocaldococcus sp. (strain FS406-22), this protein is 6-carboxyhexanoate--CoA ligase.